The sequence spans 150 residues: Photosystem I reaction center subunit XI (150 aa).

Over 1-72 the chain is Stromal; that stretch reads MSDFIQSYNN…DKLGPLRNTD (72 aa). The helical transmembrane segment at 73-93 threads the bilayer; that stretch reads VALLSGFLSAVGLIIILTVCL. At 94-118 the chain is on the lumenal side; that stretch reads SMYGNVSFDKDDAKDLLQTTEGWGQ. The chain crosses the membrane as a helical span at residues 119 to 139; sequence FTAGFLVGAVGGSGFAYLLLA. Topologically, residues 140-150 are stromal; it reads NIPVLQNLGLS.

The protein belongs to the PsaL family.

The protein resides in the plastid. It is found in the chloroplast thylakoid membrane. This Gracilaria tenuistipitata var. liui (Red alga) protein is Photosystem I reaction center subunit XI.